The primary structure comprises 457 residues: MSWSILELLRKNPEDLKNNLKRRAIDVSLVDKAVELDKKWRQVLQEVEKLRHQHNVLSSQISKLSGEERKKKIEESKNLLKILEEKEKELEEIENERDRLLSSLPNLVADDVPNGPDDSYNVPIKFWGKFKVYEGDVQEFLKQIKDAKVNYEVIKWKPKGHAEMLEDVLHLGNTLKAAEIAGSRFYYLFNDIVWLDFSLLLFAIDYITQQGYTLVLPPYMLRGEVIQSVIDLDTFKDAIYKIENEDLYLIATAEHPIAAMFFKEEIEKDKLPLKFAGISPAFRKEASAANKDLKGIFRVHQFHKVEQFIFSTPEDSWKYHSELITNAESIFQQLELPYRIVNIASGDLGACAAKKFDLEVWMPAQAKFREMVSCSNCTDWQAFRMKIRYVDRKNNRRGYVHTLNSTAIASTRTITAILENYQREDGVVEVPKVLRKYLEAFPKAPKDYIYPLKNKII.

An L-serine-binding site is contributed by 252–254 (TAE). ATP contacts are provided by residues 283–285 (RKE) and Val-299. Residue Glu-306 participates in L-serine binding. 370–373 (EMVS) contributes to the ATP binding site. Thr-406 contacts L-serine.

It belongs to the class-II aminoacyl-tRNA synthetase family. Type-1 seryl-tRNA synthetase subfamily. In terms of assembly, homodimer. The tRNA molecule binds across the dimer.

The protein localises to the cytoplasm. The enzyme catalyses tRNA(Ser) + L-serine + ATP = L-seryl-tRNA(Ser) + AMP + diphosphate + H(+). The catalysed reaction is tRNA(Sec) + L-serine + ATP = L-seryl-tRNA(Sec) + AMP + diphosphate + H(+). The protein operates within aminoacyl-tRNA biosynthesis; selenocysteinyl-tRNA(Sec) biosynthesis; L-seryl-tRNA(Sec) from L-serine and tRNA(Sec): step 1/1. Functionally, catalyzes the attachment of serine to tRNA(Ser). Is also able to aminoacylate tRNA(Sec) with serine, to form the misacylated tRNA L-seryl-tRNA(Sec), which will be further converted into selenocysteinyl-tRNA(Sec). The protein is Serine--tRNA ligase of Saccharolobus solfataricus (strain ATCC 35092 / DSM 1617 / JCM 11322 / P2) (Sulfolobus solfataricus).